Here is a 70-residue protein sequence, read N- to C-terminus: Large ribosomal subunit protein bL32 (70 aa).

A compositionally biased stretch (basic residues) spans 1–19 (MAVPKRKTTPSRRGMRRSH). A disordered region spans residues 1–21 (MAVPKRKTTPSRRGMRRSHQA).

Belongs to the bacterial ribosomal protein bL32 family.

In Gluconobacter oxydans (strain 621H) (Gluconobacter suboxydans), this protein is Large ribosomal subunit protein bL32.